Here is an 877-residue protein sequence, read N- to C-terminus: MAGLDLSLVLMLSVLAGVREVSLTQVNQQGVIAPGDIIIGGLFPIHEAAEAVNFTGLNSFSSFQHPVCNRYYTKGLNQALAMIHAVEMANQSPMLSSLNLTLGYRIYDTCSDVTTALWAVQDLTRPYSYCDSQTNSSQPVQPIMAVIGPSSSEISIAVARELNLLMIPQISYASTATILSDKSRFPAFMRTVPNDEYQTHAMVQLLKDNKWTWVGIIITDGDYGRSAMESFVKHTEREGICVAFKVILPDSLADEQKLNIHINETVDIIEKNTKVNVVVSFAKSSQMKLLYEGLRSRNVPKNKVWVASDNWSTSKNILKDVNLSDIGNILGFTFKSGNVTAFLQYLKDLKFGSEAKMNNSFLEEFLKLPEIGNAANAVQEQIKNTHLDMVFSVQMAVSAIAKAVVELCVERQCKTPSAIQPWELLKQLRNVTFEKEGVMYNFDANGDINLGYDVCLWDDDESEKNDIIAEYYPSNSSFTFTRKNLSNIENVLSKCSDSCQPGEYKKTAEGQHTCCYECLACAENQYSNHTDADTCSKCDTESLWSNANSSKCYPKFYEYFEWNSGFAIALLTLAALGILLLISMSALFFWQRNSLVVKAAGGPLCHLILFSLLGSFISVIFFVGEPSNESCRVRQVIFGLSFTLCVSCILVKSLKILLAFQMNLELKELLRKLYKPYVIVCMCMGLQVTICTLWLTLHRPFIEKVVQPKSILLECNEGSDLMFGLMLGYIVLLALICFTFAYKGRKLPQKYNEAKFITFGMLIYLMAWVIFIPVHVTTSGKYVPAVEVVVILISNYGILSCHFLPKCYIIIFKKEYNTKDAFLKNVFEYARKSSENIRGLSGTDPHSKTDNSVYVISNPSLVPEEKQVSVPEIDNVL.

A signal peptide spans Met-1 to Thr-24. Residues Gln-25 to Ala-567 lie on the Extracellular side of the membrane. N-linked (GlcNAc...) asparagine glycosylation is found at Asn-53, Asn-99, Asn-135, Asn-263, Asn-310, Asn-322, Asn-338, and Asn-358. Asp-388 is an L-lysine binding site. Asn-430, Asn-475, Asn-484, Asn-528, and Asn-548 each carry an N-linked (GlcNAc...) asparagine glycan. The helical transmembrane segment at Ile-568 to Phe-588 threads the bilayer. The Cytoplasmic segment spans residues Phe-589–Pro-603. A helical membrane pass occupies residues Leu-604–Gly-624. Over Glu-625–Gln-635 the chain is Extracellular. N-linked (GlcNAc...) asparagine glycosylation occurs at Asn-628. A helical transmembrane segment spans residues Val-636 to Ile-656. At Leu-657–Pro-676 the chain is on the cytoplasmic side. Residues Tyr-677–Leu-697 traverse the membrane as a helical segment. Over His-698–Asp-720 the chain is Extracellular. The helical transmembrane segment at Leu-721–Ala-741 threads the bilayer. Topologically, residues Tyr-742–Lys-755 are cytoplasmic. The helical transmembrane segment at Phe-756–Val-776 threads the bilayer. The Extracellular segment spans residues Thr-777 to Tyr-782. The helical transmembrane segment at Val-783 to Phe-803 threads the bilayer. Over Leu-804–Leu-877 the chain is Cytoplasmic.

Belongs to the G-protein coupled receptor 3 family. As to quaternary structure, homodimer; disulfide-linked. In terms of tissue distribution, expressed in olfactory epithelium. Also expressed in gills, tongue, lips and palatal organ. Not expressed in brain, kidney, liver, muscle, intestine, ovary and skin. In olfactory epithelium, it is widely expressed over the apical and medial portions of the olfactory sensory neurons, regions that contain olfactory neurons. Expressed in external epithelia, which contains taste buds and solitary chemosensory cells. On gill rakers, it is widely expressed in the surface epithelium, but excluded from taste buds.

It localises to the cell membrane. In terms of biological role, olfactory receptor that is activated by amino acids that act as potent odorants in fish. Most highly activated by basic amino acids such as L-lysine and L-arginine. The protein is G-protein coupled receptor family C group 6 member A (gprc6a) of Carassius auratus (Goldfish).